A 488-amino-acid chain; its full sequence is Envelope glycoprotein gp62 (488 aa).

The N-terminal stretch at 1–20 is a signal peptide; it reads MGKFLATLILFFQFCPLILG. Residues 21 to 442 lie on the Extracellular side of the membrane; it reads DYSPSCCTLT…LGLSQWAREA (422 aa). 2 N-linked (GlcNAc...) asparagine; by host glycosylation sites follow: Asn-140 and Asn-222. Residues 225-228 carry the CXXC motif; it reads CIVC. 3 cysteine pairs are disulfide-bonded: Cys-225/Cys-228, Cys-225/Cys-401, and Cys-393/Cys-400. N-linked (GlcNAc...) asparagine; by host glycosylation is found at Asn-244 and Asn-272. The tract at residues 313–333 is fusion peptide; sequence AVPVAVWLVSALAMGAGVAGR. 2 coiled-coil regions span residues 341-387 and 397-429; these read ASGK…LLFW and QEQC…GWGL. Residues 376 to 392 form an immunosuppression region; sequence AQNRRGLDLLFWEQGGL. Positions 393–401 match the CX6CC motif; that stretch reads CKALQEQCC. An N-linked (GlcNAc...) asparagine; by host glycan is attached at Asn-404. Residues 443-463 form a helical membrane-spanning segment; the sequence is LQTGITLVALLLLVILAGPCI. Residue Cys-462 is the site of S-palmitoyl cysteine; by host attachment. Topologically, residues 464–488 are cytoplasmic; sequence LRQLRHLPSRVRYPHYSLINPESSL.

The mature envelope protein (Env) consists of a trimer of SU-TM heterodimers attached by a labile interchain disulfide bond. In terms of processing, specific enzymatic cleavages in vivo yield mature proteins. Envelope glycoproteins are synthesized as an inactive precursor that is N-glycosylated and processed likely by host cell furin or by a furin-like protease in the Golgi to yield the mature SU and TM proteins. The cleavage site between SU and TM requires the minimal sequence [KR]-X-[KR]-R. The CXXC motif is highly conserved across a broad range of retroviral envelope proteins. It is thought to participate in the formation of a labile disulfide bond possibly with the CX6CC motif present in the transmembrane protein. Isomerization of the intersubunit disulfide bond to an SU intrachain disulfide bond is thought to occur upon receptor recognition in order to allow membrane fusion. Post-translationally, the transmembrane protein is palmitoylated.

The protein resides in the virion membrane. Its subcellular location is the host cell membrane. Its function is as follows. The surface protein (SU) attaches the virus to the host cell by binding to its receptor. This interaction triggers the refolding of the transmembrane protein (TM) and is thought to activate its fusogenic potential by unmasking its fusion peptide. Fusion occurs at the host cell plasma membrane. The transmembrane protein (TM) acts as a class I viral fusion protein. Under the current model, the protein has at least 3 conformational states: pre-fusion native state, pre-hairpin intermediate state, and post-fusion hairpin state. During viral and target cell membrane fusion, the coiled coil regions (heptad repeats) assume a trimer-of-hairpins structure, positioning the fusion peptide in close proximity to the C-terminal region of the ectodomain. The formation of this structure appears to drive apposition and subsequent fusion of viral and target cell membranes. Membranes fusion leads to delivery of the nucleocapsid into the cytoplasm. This is Envelope glycoprotein gp62 (env) from Homo sapiens (Human).